Consider the following 385-residue polypeptide: Probable tRNA sulfurtransferase (385 aa).

The THUMP domain maps to 57–161 (NESIKRLSNV…NKNAYVWSNK (105 aa)). ATP-binding positions include 181–182 (ML), 206–207 (YY), R263, G285, and Q294.

Belongs to the ThiI family.

It is found in the cytoplasm. The catalysed reaction is [ThiI sulfur-carrier protein]-S-sulfanyl-L-cysteine + a uridine in tRNA + 2 reduced [2Fe-2S]-[ferredoxin] + ATP + H(+) = [ThiI sulfur-carrier protein]-L-cysteine + a 4-thiouridine in tRNA + 2 oxidized [2Fe-2S]-[ferredoxin] + AMP + diphosphate. It catalyses the reaction [ThiS sulfur-carrier protein]-C-terminal Gly-Gly-AMP + S-sulfanyl-L-cysteinyl-[cysteine desulfurase] + AH2 = [ThiS sulfur-carrier protein]-C-terminal-Gly-aminoethanethioate + L-cysteinyl-[cysteine desulfurase] + A + AMP + 2 H(+). Its pathway is cofactor biosynthesis; thiamine diphosphate biosynthesis. Catalyzes the ATP-dependent transfer of a sulfur to tRNA to produce 4-thiouridine in position 8 of tRNAs, which functions as a near-UV photosensor. Also catalyzes the transfer of sulfur to the sulfur carrier protein ThiS, forming ThiS-thiocarboxylate. This is a step in the synthesis of thiazole, in the thiamine biosynthesis pathway. The sulfur is donated as persulfide by IscS. The chain is Probable tRNA sulfurtransferase from Clostridium botulinum (strain Alaska E43 / Type E3).